The chain runs to 159 residues: SsrA-binding protein (159 aa).

This sequence belongs to the SmpB family.

The protein localises to the cytoplasm. Required for rescue of stalled ribosomes mediated by trans-translation. Binds to transfer-messenger RNA (tmRNA), required for stable association of tmRNA with ribosomes. tmRNA and SmpB together mimic tRNA shape, replacing the anticodon stem-loop with SmpB. tmRNA is encoded by the ssrA gene; the 2 termini fold to resemble tRNA(Ala) and it encodes a 'tag peptide', a short internal open reading frame. During trans-translation Ala-aminoacylated tmRNA acts like a tRNA, entering the A-site of stalled ribosomes, displacing the stalled mRNA. The ribosome then switches to translate the ORF on the tmRNA; the nascent peptide is terminated with the 'tag peptide' encoded by the tmRNA and targeted for degradation. The ribosome is freed to recommence translation, which seems to be the essential function of trans-translation. The chain is SsrA-binding protein from Actinobacillus pleuropneumoniae serotype 5b (strain L20).